Reading from the N-terminus, the 471-residue chain is P2X purinoceptor 2 (471 aa).

At 1–42 (MAAAQPKYPAGATARRLARGCWSALWDYETPKVIVVRNRRLG) the chain is on the cytoplasmic side. 6 disulfides stabilise this stretch: Cys-21–Cys-439, Cys-125–Cys-176, Cys-136–Cys-159, Cys-142–Cys-170, Cys-226–Cys-236, and Cys-270–Cys-279. A helical transmembrane segment spans residues 43–63 (VLYRAVQLLILLYFVWYVFIV). At 64–337 (QKSYQESETG…IVHGQAGKFS (274 aa)) the chain is on the extracellular side. ATP contacts are provided by Lys-81 and Lys-83. Residue Asn-133 is glycosylated (N-linked (GlcNAc...) asparagine). N-linked (GlcNAc...) asparagine glycosylation is present at Asn-194. Thr-196 serves as a coordination point for ATP. ATP-binding residues include Ser-296, Asn-300, and Arg-302. Asn-310 carries N-linked (GlcNAc...) asparagine glycosylation. Lys-319 serves as a coordination point for ATP. Positions 320–333 (AYGIRIDVIVHGQA) are pore-forming motif. A helical transmembrane segment spans residues 338–358 (LIPTIINLATALTSVGVGSFL). Residues 359 to 471 (CDWILLTFMN…PTDPKGLAQL (113 aa)) are Cytoplasmic-facing. The disordered stretch occupies residues 400–471 (GQAPPEPGHR…PTDPKGLAQL (72 aa)).

It belongs to the P2X receptor family. In terms of assembly, homotrimer and heterotrimer; functional P2XRs are organized as homomeric and heteromeric trimers. Homotrimer. Forms heterotrimer with P2RX1. Forms heterotrimer with P2RX6. Forms heterotrimer with P2RX3. As to expression, expressed in both the central and peripheral nervous system, as well as in the pituitary gland.

The protein resides in the cell membrane. It catalyses the reaction Ca(2+)(in) = Ca(2+)(out). The enzyme catalyses K(+)(in) = K(+)(out). The catalysed reaction is Na(+)(in) = Na(+)(out). Its activity is regulated as follows. Fast activation by external ATP. Exhibits slow desensitization during prolonged ATP activation. Not sensitive to the ATP agonist:alpha/beta-methylene-ATP. Functionally, ATP-gated nonselective transmembrane cation channel permeable to potassium, sodium and calcium. Activation by extracellular ATP induces a variety of cellular responses, such as excitatory postsynaptic responses in sensory neurons, neuromuscular junctions (NMJ) formation, hearing, perception of taste and peristalsis. In the inner ear, regulates sound transduction and auditory neurotransmission, outer hair cell electromotility, inner ear gap junctions, and K(+) recycling. Mediates synaptic transmission between neurons and from neurons to smooth muscle. The sequence is that of P2X purinoceptor 2 from Homo sapiens (Human).